A 646-amino-acid chain; its full sequence is Exoribonuclease 2 (646 aa).

In terms of domain architecture, RNB spans 191 to 518 (RIDLTALDFV…NHRLLKAIIQ (328 aa)). In terms of domain architecture, S1 motif spans 563–645 (DKTFSAEIVD…ETRNIVARPV (83 aa)).

This sequence belongs to the RNR ribonuclease family. RNase II subfamily.

It is found in the cytoplasm. The catalysed reaction is Exonucleolytic cleavage in the 3'- to 5'-direction to yield nucleoside 5'-phosphates.. Functionally, involved in mRNA degradation. Hydrolyzes single-stranded polyribonucleotides processively in the 3' to 5' direction. This is Exoribonuclease 2 from Xenorhabdus bovienii (strain SS-2004) (Xenorhabdus nematophila subsp. bovienii).